The primary structure comprises 937 residues: Protocadherin alpha-7 (937 aa).

The signal sequence occupies residues 1 to 29 (MVCPNGYDPGGRHLLLFIIILAAWEAGRG). 6 consecutive Cadherin domains span residues 30–133 (QLHY…PPVF), 134–242 (PATQ…APVF), 243–350 (DRTL…APQL), 351–455 (TLTS…APAF), 456–565 (AQPE…APAL), and 581–678 (VPRS…APKA). The Extracellular segment spans residues 30 to 697 (QLHYSVPEEA…GPETELVDVN (668 aa)). Cysteines 96 and 102 form a disulfide. N-linked (GlcNAc...) asparagine glycans are attached at residues Asn254 and Asn265. A glycan (N-linked (GlcNAc...) asparagine) is linked at Asn548. The helical transmembrane segment at 698–718 (VYLIIAICAVSSLLVLTLLLY) threads the bilayer. The Cytoplasmic segment spans residues 719-937 (TALRCSAPSS…GNSTTDNSDQ (219 aa)). Disordered stretches follow at residues 755-795 (RQRV…DWRY) and 814-937 (ILRA…NSDQ). PXXP repeat units follow at residues 774–777 (PSLP), 786–789 (PRQP), 819–822 (PGGP), 860–863 (PGNP), and 878–881 (PGSP). The segment at 774 to 881 (PSLPQGPSST…PDKFIIPGSP (108 aa)) is 5 X 4 AA repeats of P-X-X-P. Residues 775–787 (SLPQGPSSTDNPR) show a composition bias toward polar residues. Residues 896-910 (DKSDFITFGKKEETK) show a composition bias toward basic and acidic residues.

In terms of assembly, forms homodimers in trans (molecules expressed by two different cells). Forms promiscuous heterodimers in cis (at the plasma membrane of the same cell) with other protocadherins.

It localises to the cell membrane. In terms of biological role, calcium-dependent cell-adhesion protein involved in cells self-recognition and non-self discrimination. Thereby, it is involved in the establishment and maintenance of specific neuronal connections in the brain. The polypeptide is Protocadherin alpha-7 (Homo sapiens (Human)).